The sequence spans 97 residues: Co-chaperonin GroES (97 aa).

It belongs to the GroES chaperonin family. Heptamer of 7 subunits arranged in a ring. Interacts with the chaperonin GroEL.

It is found in the cytoplasm. In terms of biological role, together with the chaperonin GroEL, plays an essential role in assisting protein folding. The GroEL-GroES system forms a nano-cage that allows encapsulation of the non-native substrate proteins and provides a physical environment optimized to promote and accelerate protein folding. GroES binds to the apical surface of the GroEL ring, thereby capping the opening of the GroEL channel. This is Co-chaperonin GroES from Oleispira antarctica.